A 121-amino-acid chain; its full sequence is Large ribosomal subunit protein bL12 (121 aa).

Belongs to the bacterial ribosomal protein bL12 family. As to quaternary structure, homodimer. Part of the ribosomal stalk of the 50S ribosomal subunit. Forms a multimeric L10(L12)X complex, where L10 forms an elongated spine to which 2 to 4 L12 dimers bind in a sequential fashion. Binds GTP-bound translation factors.

In terms of biological role, forms part of the ribosomal stalk which helps the ribosome interact with GTP-bound translation factors. Is thus essential for accurate translation. This chain is Large ribosomal subunit protein bL12, found in Tremblaya princeps.